The following is a 187-amino-acid chain: Flavin prenyltransferase LpdB (187 aa).

FMN is bound by residues 10–12 (GAS), S37, 88–91 (SMKT), and R123. Residues Y153 and K169 each coordinate dimethylallyl phosphate.

This sequence belongs to the UbiX/PAD1 family.

It catalyses the reaction dimethylallyl phosphate + FMNH2 = prenylated FMNH2 + phosphate. Functionally, involved in tannin degradation. Flavin prenyltransferase that catalyzes the synthesis of the prenylated FMN cofactor (prenyl-FMN) for gallate decarboxylase LpdC. The prenyltransferase is metal-independent and links a dimethylallyl moiety from dimethylallyl monophosphate (DMAP) to the flavin N5 and C6 atoms of FMN. The sequence is that of Flavin prenyltransferase LpdB from Lactiplantibacillus plantarum (strain ATCC BAA-793 / NCIMB 8826 / WCFS1) (Lactobacillus plantarum).